Here is a 286-residue protein sequence, read N- to C-terminus: uncharacterized protein (286 aa).

The segment at 1–47 (MAIPFLHKGGSDDSTHHHTHDYDHHNHDHHGHDHHSHDSSSNSSSEA) is disordered. Residues 9–26 (GGSDDSTHHHTHDYDHHN) are compositionally biased toward basic and acidic residues. A GTP-binding site is contributed by 93–100 (GPVGSGKT).

It belongs to the SIMIBI class G3E GTPase family. UreG subfamily.

It localises to the cytoplasm. The protein localises to the nucleus. Its function is as follows. Probably facilitates nickel incorporation. This is an uncharacterized protein from Schizosaccharomyces pombe (strain 972 / ATCC 24843) (Fission yeast).